A 978-amino-acid chain; its full sequence is LRR receptor-like serine/threonine-protein kinase ER1 (978 aa).

An N-terminal signal peptide occupies residues 1–24; it reads MTPAPAAASYRALVALLLVAVAVA. The Extracellular segment spans residues 25-577; sequence DDGSTLLEIK…GHQQKPLISK (553 aa). Asn-62 and Asn-71 each carry an N-linked (GlcNAc...) asparagine glycan. LRR repeat units lie at residues 66 to 87, 88 to 112, 114 to 136, 137 to 159, 160 to 184, 186 to 208, 209 to 232, 233 to 257, 259 to 278, 279 to 302, 304 to 327, 328 to 350, 352 to 375, 377 to 399, 400 to 423, 424 to 447, 449 to 470, 471 to 494, 496 to 518, and 519 to 543; these read AVAALNLSGLNLGGEISPAVGR, LKGIVSIDLKSNGLSGQIPDEIGDC, SLKTLDLSFNSLDGDIPFSVSKL, KHIESLILKNNQLIGVIPSTLSQ, LPNLKILDLAQNKLSGEIPRLIYWN, VLQYLGLRGNNLEGSISPDICQL, TGLWYFDVKNNSLTGPIPETIGNC, TSFQVLDLSYNKLSGSIPFNIGFLQ, ATLSLQGNMFTGPIPSVIGL, MQALAVLDLSYNQLSGPIPSILGN, TYTEKLYMQGNKLTGPIPPELGNM, STLHYLELNDNQLSGFIPPEFGK, TGLFDLNLANNNFEGPIPDNISSC, NLNSFNAYGNRLNGTIPPSLHKL, ESMTYLNLSSNFLSGSIPIELSRI, NNLDTLDLSCNMITGPIPSTIGSL, HLLRLNLSNNGLVGFIPAEIGN, LRSIMEIDMSNNHLGGLIPQELGM, QNLMLLNLKNNNITGDVSSLMNC, and FSLNILNVSYNNLAGVVPTDNNFSR. 2 N-linked (GlcNAc...) asparagine glycosylation sites follow: Asn-218 and Asn-231. N-linked (GlcNAc...) asparagine glycosylation is found at Asn-302 and Asn-326. N-linked (GlcNAc...) asparagine glycans are attached at residues Asn-371, Asn-389, and Asn-406. N-linked (GlcNAc...) asparagine glycosylation is present at Asn-454. N-linked (GlcNAc...) asparagine glycosylation is found at Asn-507, Asn-525, and Asn-540. The helical transmembrane segment at 578-598 threads the bilayer; sequence AAILGIAVGGLVILLMILVAV. The Cytoplasmic segment spans residues 599–978; sequence CRPHSPPVFK…FGEVISQNTE (380 aa). Residues 645-916 enclose the Protein kinase domain; it reads LSEKYIIGYG…EVVRVLDCLV (272 aa). ATP-binding positions include 651 to 659 and Lys-673; that span reads IGYGASSTV. Asp-771 (proton acceptor) is an active-site residue.

It belongs to the protein kinase superfamily. Ser/Thr protein kinase family.

It localises to the cell membrane. The catalysed reaction is L-seryl-[protein] + ATP = O-phospho-L-seryl-[protein] + ADP + H(+). The enzyme catalyses L-threonyl-[protein] + ATP = O-phospho-L-threonyl-[protein] + ADP + H(+). Functionally, receptor kinase involved in the regulation of thermotolerance. Functions as a positive regulator of heat tolerance. May be involved in the regulation of cell proliferation and cell growth. The polypeptide is LRR receptor-like serine/threonine-protein kinase ER1 (Oryza sativa subsp. japonica (Rice)).